The chain runs to 158 residues: MLSPKRVKFRKMQRGRMRGVATRGNTIAFGEFALQAQECGWITSRQIEASRRAMTRYVKRGGKIWIRIFPDKSITMRAAETRMGSGKGNPEFWVAVIKPGRILFEMGGAEITPEIAKEAMRLAQYKLPVKTKFIALDEQQKQSAAEAPAAAEAVNVES.

It belongs to the universal ribosomal protein uL16 family. In terms of assembly, part of the 50S ribosomal subunit.

Binds 23S rRNA and is also seen to make contacts with the A and possibly P site tRNAs. The sequence is that of Large ribosomal subunit protein uL16 from Parasynechococcus marenigrum (strain WH8102).